Here is an 833-residue protein sequence, read N- to C-terminus: EF-hand domain-containing family member B (833 aa).

EF-hand domains follow at residues 561–596 (QKFD…ANLS) and 597–632 (LDDK…KDKM). The Ca(2+) site is built by Asp-574, Asp-578, Met-580, Glu-585, Asp-610, Asp-612, Asp-614, and Glu-621.

As to quaternary structure, microtubule inner protein component of sperm flagellar doublet microtubules. Interacts with STIM1 and ORAI1; the interactions take place upon Ca(2+)-store depletion and dissociate through a Ca(2+)-dependent mechanism. Interaction with STIM1 inhibits STIM1 interaction with SARAF. Expressed in airway epithelial cells.

It localises to the cytoplasm. It is found in the cytoskeleton. Its subcellular location is the cilium axoneme. The protein localises to the flagellum axoneme. In terms of biological role, microtubule inner protein (MIP) part of the dynein-decorated doublet microtubules (DMTs) in cilia axoneme, which is required for motile cilia beating. Cytosolic sensor for calcium, modulates the interaction of STIM1 and ORAI1 upon store depletion and the activation of store-operated Ca(2+) entry (SOCE) and NFAT translocation from cytosol to nucleus. This chain is EF-hand domain-containing family member B, found in Homo sapiens (Human).